Reading from the N-terminus, the 315-residue chain is MTSKSTFVLGHRHLLGIEGLSAADITGLLDLSEEYVELNRQVDKKRTVLRGRTQVNLFFEASTRTQSSFELAGKRLGADVMNMSVSSSSIKKGETLVDTAMTLNAMHPDILVVRHHASGAVELLARKVDGSVINAGDGAHEHPTQALLDALTIRRNKGRIEGLVVAICGDVLHSRVARSNIILLNTMGARVRVVGPSTLLPPGIERMGVEVARDMREGLNGADIVMMLRLQRERMNGSFVPSTSEYFNYFGLDQKKLGYAKPDALVMHPGPMNRGVEIDTAVADGAQSLIREQVEMGVAVRMAVLEALARNLPNA.

Residues R64 and T65 each contribute to the carbamoyl phosphate site. Position 92 (K92) interacts with L-aspartate. R114, H142, and Q145 together coordinate carbamoyl phosphate. The L-aspartate site is built by R175 and R229. Carbamoyl phosphate-binding residues include G270 and P271.

The protein belongs to the aspartate/ornithine carbamoyltransferase superfamily. ATCase family. Heterododecamer (2C3:3R2) of six catalytic PyrB chains organized as two trimers (C3), and six regulatory PyrI chains organized as three dimers (R2).

The catalysed reaction is carbamoyl phosphate + L-aspartate = N-carbamoyl-L-aspartate + phosphate + H(+). It participates in pyrimidine metabolism; UMP biosynthesis via de novo pathway; (S)-dihydroorotate from bicarbonate: step 2/3. Its function is as follows. Catalyzes the condensation of carbamoyl phosphate and aspartate to form carbamoyl aspartate and inorganic phosphate, the committed step in the de novo pyrimidine nucleotide biosynthesis pathway. This Bradyrhizobium diazoefficiens (strain JCM 10833 / BCRC 13528 / IAM 13628 / NBRC 14792 / USDA 110) protein is Aspartate carbamoyltransferase catalytic subunit.